A 706-amino-acid polypeptide reads, in one-letter code: Triadin (706 aa).

A disordered region spans residues 1–28 (MTEITAEGNASTTTTVIDSKNGSVPKSP). Over 1 to 47 (MTEITAEGNASTTTTVIDSKNGSVPKSPGKVLKRTVTEDLVTTFSSP) the chain is Cytoplasmic. Over residues 8-24 (GNASTTTTVIDSKNGSV) the composition is skewed to polar residues. The chain crosses the membrane as a helical span at residues 48-68 (AAWLLVIALIITWSAVAVVMF). Residues 69–706 (DLVDYKNFSA…GKPNSPGPKQ (638 aa)) lie on the Lumenal side of the membrane. Asn75 carries N-linked (GlcNAc...) asparagine glycosylation. The span at 117–127 (DGDEEDDEGDE) shows a compositional bias: acidic residues. Disordered regions lie at residues 117 to 265 (DGDE…EQKD), 281 to 663 (DLKP…KKQK), and 684 to 706 (FPVTPAQYPGESSGKPNSPGPKQ). Basic and acidic residues-rich tracts occupy residues 128-254 (DTAK…ESKE), 309-358 (PEEK…KSPD), 372-432 (TKKD…KEEV), 443-518 (AKKE…EVKP), 525-552 (IKKEEKPEQDIMKPEKTALHGKPEEKVL), 570-588 (KKAEHQEKEPPSIKTDKPK), and 599-621 (ESGKKKIEKSEKEIKVPARRESH). An N-linked (GlcNAc...) asparagine glycan is attached at Asn625. Positions 628–651 (KAEKPARGSKEGFEDVPASKKAKE) are enriched in basic and acidic residues.

In terms of assembly, interacts with CASQ2. Homooligomer of variable subunit number; disulfide-linked. Interacts with CASQ1 and RYR1 in skeletal muscle. In terms of processing, phosphorylated by CaMK2. N-glycosylated. In terms of tissue distribution, detected in skeletal muscle and in heart (at protein level). Detected in skeletal muscle and in heart.

It localises to the sarcoplasmic reticulum membrane. Functionally, contributes to the regulation of lumenal Ca2+ release via the sarcoplasmic reticulum calcium release channels RYR1 and RYR2, a key step in triggering skeletal and heart muscle contraction. Required for normal organization of the triad junction, where T-tubules and the sarcoplasmic reticulum terminal cisternae are in close contact. Required for normal skeletal muscle strength. Plays a role in excitation-contraction coupling in the heart and in regulating the rate of heart beats. The protein is Triadin (TRDN) of Oryctolagus cuniculus (Rabbit).